The sequence spans 272 residues: Dermonecrotic toxin LvSicTox-alphaIC1bi (272 aa).

H5 is a catalytic residue. The Mg(2+) site is built by E25 and D27. Catalysis depends on H41, which acts as the Nucleophile. 2 disulfide bridges follow: C45-C51 and C47-C189. Position 84 (D84) interacts with Mg(2+).

It belongs to the arthropod phospholipase D family. Class II subfamily. Mg(2+) serves as cofactor. In terms of tissue distribution, expressed by the venom gland.

It is found in the secreted. The enzyme catalyses an N-(acyl)-sphingosylphosphocholine = an N-(acyl)-sphingosyl-1,3-cyclic phosphate + choline. It catalyses the reaction an N-(acyl)-sphingosylphosphoethanolamine = an N-(acyl)-sphingosyl-1,3-cyclic phosphate + ethanolamine. It carries out the reaction a 1-acyl-sn-glycero-3-phosphocholine = a 1-acyl-sn-glycero-2,3-cyclic phosphate + choline. The catalysed reaction is a 1-acyl-sn-glycero-3-phosphoethanolamine = a 1-acyl-sn-glycero-2,3-cyclic phosphate + ethanolamine. Dermonecrotic toxins cleave the phosphodiester linkage between the phosphate and headgroup of certain phospholipids (sphingolipid and lysolipid substrates), forming an alcohol (often choline) and a cyclic phosphate. This toxin acts on sphingomyelin (SM). It may also act on ceramide phosphoethanolamine (CPE), lysophosphatidylcholine (LPC) and lysophosphatidylethanolamine (LPE), but not on lysophosphatidylserine (LPS), and lysophosphatidylglycerol (LPG). It acts by transphosphatidylation, releasing exclusively cyclic phosphate products as second products. Induces dermonecrosis, hemolysis, increased vascular permeability, edema, inflammatory response, and platelet aggregation. This is Dermonecrotic toxin LvSicTox-alphaIC1bi from Loxosceles variegata (Recluse spider).